The chain runs to 278 residues: MVGEFRWQAGRPATAQVGGWVLAHCQQRFLQDDNGLLFPREWLKRQELPLLAEHGVGHWQGEPVYVLELDEPIELPGMAWAPLRQFMLHGDFDQFCMLGYASQIGIWARHNRFCGNCGTRMQAQDHERVMQCPQCGLHQYPRLSPSMIVLVTRGDEVLLARSPRFVPGVYSTLAGFVEAGESVEQCVVREVREEVGVEVANLEYIGSQNWPFPHSLMLGFHAEYVSGEIVPQEDEIEDAQWFSLDALPPLPAQRSIARHLIDLYLARRSGAAEPVLPG.

Arginine 84 serves as a coordination point for substrate. Cysteine 114 and cysteine 117 together coordinate Zn(2+). Position 127 (glutamate 127) interacts with substrate. Zn(2+) contacts are provided by cysteine 132 and cysteine 135. Tyrosine 140 serves as a coordination point for substrate. The 125-residue stretch at 141-265 (PRLSPSMIVL…IARHLIDLYL (125 aa)) folds into the Nudix hydrolase domain. A divalent metal cation-binding residues include alanine 174, glutamate 190, and glutamate 194. A Nudix box motif is present at residues 175–196 (GFVEAGESVEQCVVREVREEVG). 208–215 (QNWPFPHS) contributes to the substrate binding site. Residue glutamate 235 coordinates a divalent metal cation. Residue alanine 257 participates in substrate binding.

The protein belongs to the Nudix hydrolase family. NudC subfamily. Homodimer. Mg(2+) is required as a cofactor. The cofactor is Mn(2+). It depends on Zn(2+) as a cofactor.

The catalysed reaction is a 5'-end NAD(+)-phospho-ribonucleoside in mRNA + H2O = a 5'-end phospho-adenosine-phospho-ribonucleoside in mRNA + beta-nicotinamide D-ribonucleotide + 2 H(+). It catalyses the reaction NAD(+) + H2O = beta-nicotinamide D-ribonucleotide + AMP + 2 H(+). The enzyme catalyses NADH + H2O = reduced beta-nicotinamide D-ribonucleotide + AMP + 2 H(+). Its function is as follows. mRNA decapping enzyme that specifically removes the nicotinamide adenine dinucleotide (NAD) cap from a subset of mRNAs by hydrolyzing the diphosphate linkage to produce nicotinamide mononucleotide (NMN) and 5' monophosphate mRNA. The NAD-cap is present at the 5'-end of some mRNAs and stabilizes RNA against 5'-processing. Has preference for mRNAs with a 5'-end purine. Catalyzes the hydrolysis of a broad range of dinucleotide pyrophosphates. This Pseudomonas aeruginosa (strain LESB58) protein is NAD-capped RNA hydrolase NudC.